We begin with the raw amino-acid sequence, 175 residues long: uncharacterized protein (175 aa).

Residues 107–138 (KTEEEAEKTLQEIERKIFKKLWENLDKERKRE) adopt a coiled-coil conformation.

This is an uncharacterized protein from Aquifex aeolicus (strain VF5).